A 914-amino-acid polypeptide reads, in one-letter code: Protein translocase subunit SecA (914 aa).

ATP contacts are provided by residues glutamine 87, 105–109, and aspartate 508; that span reads GEGKT. Cysteine 898, cysteine 900, cysteine 909, and histidine 910 together coordinate Zn(2+).

Belongs to the SecA family. Monomer and homodimer. Part of the essential Sec protein translocation apparatus which comprises SecA, SecYEG and auxiliary proteins SecDF-YajC and YidC. The cofactor is Zn(2+).

It localises to the cell inner membrane. Its subcellular location is the cytoplasm. The enzyme catalyses ATP + H2O + cellular proteinSide 1 = ADP + phosphate + cellular proteinSide 2.. Part of the Sec protein translocase complex. Interacts with the SecYEG preprotein conducting channel. Has a central role in coupling the hydrolysis of ATP to the transfer of proteins into and across the cell membrane, serving both as a receptor for the preprotein-SecB complex and as an ATP-driven molecular motor driving the stepwise translocation of polypeptide chains across the membrane. This is Protein translocase subunit SecA from Xylella fastidiosa (strain 9a5c).